A 225-amino-acid chain; its full sequence is uncharacterized protein (225 aa).

The span at 1–19 shows a compositional bias: polar residues; the sequence is MKFNSISPNKQHHTGFTTS. Positions 1-21 are disordered; that stretch reads MKFNSISPNKQHHTGFTTSNN.

This is an uncharacterized protein from Dictyostelium discoideum (Social amoeba).